Here is a 393-residue protein sequence, read N- to C-terminus: F-box/kelch-repeat protein At4g19865 (393 aa).

Residues 1-30 (MNFQVEPPEKKKTKNSSPPHSPPSSSSPSL) form a disordered region. The F-box domain occupies 27-73 (SPSLSLLPEEIVVHCLARISRLYYPTLSLVSKSFRSILSSTELYATR). Kelch repeat units follow at residues 148–190 (EIYV…FHDG), 191–237 (KIYV…RSGV), 239–272 (EGKIEFGNVNEMCAYDTKLCKWEYCVNKSAALRS), and 273–320 (ECMI…GGSS).

This is F-box/kelch-repeat protein At4g19865 from Arabidopsis thaliana (Mouse-ear cress).